Here is a 164-residue protein sequence, read N- to C-terminus: Thiol peroxidase (164 aa).

Residues 18–163 enclose the Thioredoxin domain; that stretch reads INEGDFAPDF…FDAALAAYKN (146 aa). Residue cysteine 60 is the Cysteine sulfenic acid (-SOH) intermediate of the active site. Residues cysteine 60 and cysteine 93 are joined by a disulfide bond.

It belongs to the peroxiredoxin family. Tpx subfamily. Homodimer.

The catalysed reaction is a hydroperoxide + [thioredoxin]-dithiol = an alcohol + [thioredoxin]-disulfide + H2O. Thiol-specific peroxidase that catalyzes the reduction of hydrogen peroxide and organic hydroperoxides to water and alcohols, respectively. Plays a role in cell protection against oxidative stress by detoxifying peroxides. The protein is Thiol peroxidase of Staphylococcus aureus (strain Mu50 / ATCC 700699).